We begin with the raw amino-acid sequence, 826 residues long: Eukaryotic translation initiation factor 3 subunit C (826 aa).

Disordered stretches follow at residues 1-71 (MSRF…GKGA) and 205-227 (SGGD…PRAK). Acidic residues predominate over residues 10-20 (DSDDSSSDEDL). Over residues 21-30 (YGSGSESGSD) the composition is skewed to low complexity. Positions 32–65 (SQDEQDGGDDNDDDMSDDSMFADDSDDDSDDDED) are enriched in acidic residues. Positions 218-227 (KEDKPKPRAK) are enriched in basic and acidic residues. The 175-residue stretch at 605-779 (FHTHINLELL…NSVVFTQAVQ (175 aa)) folds into the PCI domain.

It belongs to the eIF-3 subunit C family. In terms of assembly, component of the eukaryotic translation initiation factor 3 (eIF-3) complex.

It is found in the cytoplasm. Component of the eukaryotic translation initiation factor 3 (eIF-3) complex, which is involved in protein synthesis of a specialized repertoire of mRNAs and, together with other initiation factors, stimulates binding of mRNA and methionyl-tRNAi to the 40S ribosome. The eIF-3 complex specifically targets and initiates translation of a subset of mRNAs involved in cell proliferation. This chain is Eukaryotic translation initiation factor 3 subunit C, found in Yarrowia lipolytica (strain CLIB 122 / E 150) (Yeast).